The following is a 350-amino-acid chain: 2,5-dihydroxypyridine 5,6-dioxygenase (350 aa).

The Fe cation site is built by His-265, His-318, and Asp-320.

Fe(2+) is required as a cofactor.

It catalyses the reaction 2,5-dihydroxypyridine + O2 = N-formylmaleamate + H(+). It functions in the pathway cofactor degradation; nicotinate degradation. Catalyzes the dioxygenolytic ring cleavage of 2,5-dihydroxypyridine between carbons 5 and 6 generating N-formylmaleamate in the aerobic nicotinate degradation pathway. This Pseudomonas putida (strain ATCC 47054 / DSM 6125 / CFBP 8728 / NCIMB 11950 / KT2440) protein is 2,5-dihydroxypyridine 5,6-dioxygenase (nicX).